The sequence spans 1950 residues: E3 ubiquitin-protein ligase UBR1 (1950 aa).

Residues His118, Cys123, Cys136, Cys139, Cys148, Cys151, His157, His160, His161, Cys175, Cys177, and Cys189 each contribute to the Zn(2+) site. The UBR-type zinc-finger motif lies at Arg121 to Gln194. Phosphoserine is present on residues Ser296 and Ser300. The ubiquitin-binding loop stretch occupies residues His678–His681. Asp952 contacts Zn(2+). The UBC2-binding region (U2BR) stretch occupies residues Lys1165–Glu1200. Zn(2+)-binding residues include Cys1220, Cys1223, Cys1295, His1297, His1300, Cys1303, Cys1320, and Cys1323. The RING-type; atypical zinc finger occupies Cys1220–Gln1324. The tract at residues Leu1333–Ile1665 is cap helical domain (CHD). Positions 1703, 1706, 1722, 1727, 1763, and 1775 each coordinate Zn(2+). Disordered regions lie at residues Arg1826–Gly1846 and Thr1893–Trp1950. Composition is skewed to acidic residues over residues Thr1833–Gly1846 and Asp1934–Trp1950. At Ser1938 the chain carries Phosphoserine.

This sequence belongs to the E3 ubiquitin-protein ligase UBR1-like family. In terms of assembly, interacts with UBC2. Interacts with RPN2, RPT1 and RPT6 from the 26S proteasome.

It catalyses the reaction S-ubiquitinyl-[E2 ubiquitin-conjugating enzyme]-L-cysteine + [acceptor protein]-L-lysine = [E2 ubiquitin-conjugating enzyme]-L-cysteine + N(6)-ubiquitinyl-[acceptor protein]-L-lysine.. It functions in the pathway protein modification; protein ubiquitination. Its function is as follows. Ubiquitin ligase protein which is a component of the N-end rule pathway. Recognizes and binds to proteins bearing specific N-terminal residues that are destabilizing according to the N-end rule, leading to their ubiquitination and subsequent degradation. Recognizes both type-1 and type-2 N-degrons, containing positively charged amino acids (Arg, Lys and His) and bulky and hydrophobic amino acids, respectively. This is E3 ubiquitin-protein ligase UBR1 from Saccharomyces cerevisiae (strain ATCC 204508 / S288c) (Baker's yeast).